Reading from the N-terminus, the 138-residue chain is Basic phospholipase A2 Pla2Vb (138 aa).

The first 16 residues, 1–16 (MRTLWIVAVWLMGVEG), serve as a signal peptide directing secretion. Intrachain disulfides connect cysteine 42/cysteine 131, cysteine 44/cysteine 60, cysteine 59/cysteine 111, cysteine 65/cysteine 138, cysteine 66/cysteine 104, cysteine 73/cysteine 97, and cysteine 91/cysteine 102. The Ca(2+) site is built by tyrosine 43, glycine 45, and glycine 47. Histidine 63 is a catalytic residue. Aspartate 64 serves as a coordination point for Ca(2+). The active site involves aspartate 105.

The protein belongs to the phospholipase A2 family. Group II subfamily. D49 sub-subfamily. Ca(2+) is required as a cofactor. Expressed by the venom gland.

The protein resides in the secreted. It catalyses the reaction a 1,2-diacyl-sn-glycero-3-phosphocholine + H2O = a 1-acyl-sn-glycero-3-phosphocholine + a fatty acid + H(+). Its function is as follows. Snake venom phospholipase A2 (PLA2) that exhibits medium anticoagulant effects by binding to factor Xa (F10) and inhibiting the prothrombinase activity (IC(50) is 90 nM). PLA2 catalyzes the calcium-dependent hydrolysis of the 2-acyl groups in 3-sn-phosphoglycerides. This Vipera berus berus (Common viper) protein is Basic phospholipase A2 Pla2Vb.